The sequence spans 312 residues: Malate dehydrogenase (312 aa).

Residues 12–17 (GAGFTG) and Asp36 each bind NAD(+). Arg87 and Arg93 together coordinate substrate. NAD(+) contacts are provided by residues Asn100 and 123–125 (LTN). Asn125 serves as a coordination point for substrate. Ser149 carries the post-translational modification Phosphoserine. A substrate-binding site is contributed by Arg156. The active-site Proton acceptor is the His180.

The protein belongs to the LDH/MDH superfamily. MDH type 3 family.

It catalyses the reaction (S)-malate + NAD(+) = oxaloacetate + NADH + H(+). Its function is as follows. Catalyzes the reversible oxidation of malate to oxaloacetate. This Bacillus pumilus (strain SAFR-032) protein is Malate dehydrogenase.